A 132-amino-acid chain; its full sequence is MSFTDPIGDMLTRIRNASNARHEKVLVPASRLKVRIAEVLRDEGFIKDFVRHEDGPQGAITIVLKYSGDREPAISDIKRVSKPGLRRYVPTDSIPRVLNGMGIAILSTSKGVMVDREARKQKVGGELICTVW.

Belongs to the universal ribosomal protein uS8 family. Part of the 30S ribosomal subunit. Contacts proteins S5 and S12.

One of the primary rRNA binding proteins, it binds directly to 16S rRNA central domain where it helps coordinate assembly of the platform of the 30S subunit. The polypeptide is Small ribosomal subunit protein uS8 (Anaeromyxobacter sp. (strain Fw109-5)).